The chain runs to 239 residues: tRNA (guanine-N(7)-)-methyltransferase (239 aa).

S-adenosyl-L-methionine-binding residues include Glu68, Glu93, Asp120, and Asp143. Asp143 is an active-site residue. Residues Lys147, Asp180, and 217–220 (TKFE) each bind substrate.

This sequence belongs to the class I-like SAM-binding methyltransferase superfamily. TrmB family.

The catalysed reaction is guanosine(46) in tRNA + S-adenosyl-L-methionine = N(7)-methylguanosine(46) in tRNA + S-adenosyl-L-homocysteine. The protein operates within tRNA modification; N(7)-methylguanine-tRNA biosynthesis. Its function is as follows. Catalyzes the formation of N(7)-methylguanine at position 46 (m7G46) in tRNA. This is tRNA (guanine-N(7)-)-methyltransferase from Vibrio cholerae serotype O1 (strain ATCC 39315 / El Tor Inaba N16961).